A 514-amino-acid polypeptide reads, in one-letter code: 6-phosphofructo-2-kinase/fructose-2,6-bisphosphatase 3 (514 aa).

Residues 1–245 (MPLELTQSRV…VYYLMNIHVQ (245 aa)) are 6-phosphofructo-2-kinase. 42–50 (GLPARGKTY) serves as a coordination point for ATP. R75 and R99 together coordinate beta-D-fructose 6-phosphate. D125 is a catalytic residue. Beta-D-fructose 6-phosphate contacts are provided by T127 and R133. The active site involves C155. 164–169 (NIMEVK) lines the ATP pocket. Residues K169, R190, and Y194 each coordinate beta-D-fructose 6-phosphate. Residues 246–514 (PRTIYLCRHG…QPLLGQACLT (269 aa)) form a fructose-2,6-bisphosphatase region. Position 253 (R253) interacts with beta-D-fructose 2,6-bisphosphate. H254 serves as the catalytic Tele-phosphohistidine intermediate. N260 and G266 together coordinate beta-D-fructose 2,6-bisphosphate. Residue E323 is the Proton donor/acceptor of the active site. Positions 334, 348, 352, 363, 389, and 393 each coordinate beta-D-fructose 2,6-bisphosphate. 345–348 (YALR) contacts ATP. Residues 389-393 (QAVLR) and Y425 contribute to the ATP site. Positions 444–475 (ERSEDAKKGPNPLMRRNSVTPLASPEPTKKPR) are disordered. S461 carries the phosphoserine; by AMPK and PKA modification. T463 carries the post-translational modification Phosphothreonine. S467 carries the phosphoserine modification. The residue at position 471 (T471) is a Phosphothreonine; by PKC.

It in the C-terminal section; belongs to the phosphoglycerate mutase family. In terms of assembly, homodimer. Forms a heterodimer with PFKFB2. Post-translationally, phosphorylation by AMPK stimulates activity.

The enzyme catalyses beta-D-fructose 2,6-bisphosphate + H2O = beta-D-fructose 6-phosphate + phosphate. The catalysed reaction is beta-D-fructose 6-phosphate + ATP = beta-D-fructose 2,6-bisphosphate + ADP + H(+). Its function is as follows. Catalyzes both the synthesis and degradation of fructose 2,6-bisphosphate. The polypeptide is 6-phosphofructo-2-kinase/fructose-2,6-bisphosphatase 3 (PFKFB3) (Pongo abelii (Sumatran orangutan)).